The following is a 360-amino-acid chain: Protein DVR-1 (360 aa).

A signal peptide spans 1–16 (MVWLRLWAFLHILAIV). Residues 17–246 (TLDPELKRRE…LRCKRPRRKR (230 aa)) constitute a propeptide that is removed on maturation. N-linked (GlcNAc...) asparagine glycosylation is found at Asn113, Asn181, and Asn301. 3 disulfide bridges follow: Cys259–Cys325, Cys288–Cys357, and Cys292–Cys359.

Belongs to the TGF-beta family. Homodimer. As to expression, vegetal region of the egg.

Its subcellular location is the secreted. Serves to facilitate the differentiation of either mesoderm or endoderm either as a cofactor in an instructive signal or by providing permissive environment. The chain is Protein DVR-1 (dvr1) from Xenopus laevis (African clawed frog).